Consider the following 947-residue polypeptide: Zinc finger CCCH domain-containing protein 18 (947 aa).

M1 carries the N-acetylmethionine modification. 3 disordered regions span residues 1 to 218 (MDVA…PRPT), 275 to 295 (GGPV…TESA), and 387 to 921 (YTEA…TLSR). Phosphoserine occurs at positions 6, 32, 44, 57, 63, 70, 74, 79, and 91. The segment covering 73–85 (KSQDQDSEAHELS) has biased composition (basic and acidic residues). Positions 94–104 (EEGDDAEEDGT) are enriched in acidic residues. T104 bears the Phosphothreonine mark. 2 positions are modified to phosphoserine: S105 and S113. The span at 105 to 119 (SDLRDEASSVTRELD) shows a compositional bias: basic and acidic residues. Acidic residues-rich tracts occupy residues 120–131 (EHELDYDEEVPE) and 138–153 (QEEE…EEEK). The segment covering 160–185 (EEGKPDVQSVGEKEPTEAAKEKKKED) has biased composition (basic and acidic residues). S168 carries the phosphoserine modification. Acidic residues predominate over residues 186–202 (DDGEIDDGEIDDDDLEE). The span at 203 to 212 (GEVKDPSDRK) shows a compositional bias: basic and acidic residues. The C3H1-type zinc finger occupies 214–240 (RPRPTCRFFMKGNCTWGMNCRFIHPGV). Positions 391-479 (EPYHNYRDRE…DRDKDKEKPK (89 aa)) are enriched in basic and acidic residues. S482 is modified (phosphoserine). A Glycyl lysine isopeptide (Lys-Gly) (interchain with G-Cter in SUMO2) cross-link involves residue K505. Residues 505–515 (KRADEWKDPWR) are compositionally biased toward basic and acidic residues. Phosphoserine occurs at positions 527, 529, and 531. Residues 540 to 601 (SASSASASNS…SRSRSFSSSP (62 aa)) are compositionally biased toward low complexity. The span at 602-611 (SPSPTPSPHR) shows a compositional bias: pro residues. Glycyl lysine isopeptide (Lys-Gly) (interchain with G-Cter in SUMO2) cross-links involve residues K617 and K656. Basic and acidic residues predominate over residues 656–665 (KPGDLREARR). Low complexity-rich tracts occupy residues 687-720 (GSSY…SVHS) and 731-745 (ASPV…PTPA). Basic and acidic residues predominate over residues 755–769 (KKEDGVREEKRKRDP). The segment covering 773-804 (PPKSSKAPAGGKASQQAAAPQQAAPGQPQQGS) has biased composition (low complexity). K809 bears the N6-acetyllysine mark. K812 is covalently cross-linked (Glycyl lysine isopeptide (Lys-Gly) (interchain with G-Cter in SUMO2)). Positions 819 to 836 (AAEKGSRKRYEPSDKDRQ) are enriched in basic and acidic residues. A phosphoserine mark is found at S837, S846, S862, S887, and S890. Over residues 887-918 (SPQSKSSSKVTSVPGKATDTATAGTKSGKAST) the composition is skewed to low complexity. K902 is covalently cross-linked (Glycyl lysine isopeptide (Lys-Gly) (interchain with G-Cter in SUMO2)). A coiled-coil region spans residues 915–944 (KASTLSRREELLKQLKAVEDAIARKRAKIP).

Interacts with ZFC3H1 in a RNase-insensitive manner.

The protein localises to the nucleus. This Rattus norvegicus (Rat) protein is Zinc finger CCCH domain-containing protein 18 (Zc3h18).